The sequence spans 131 residues: Small ribosomal subunit protein uS9 (131 aa).

Belongs to the universal ribosomal protein uS9 family.

The sequence is that of Small ribosomal subunit protein uS9 from Mycoplasmopsis synoviae (strain 53) (Mycoplasma synoviae).